Here is a 307-residue protein sequence, read N- to C-terminus: GTPase Era (307 aa).

The Era-type G domain maps to 7–181; the sequence is RCGWVALLGP…VKLVKSKLPV (175 aa). The interval 15–22 is G1; sequence GPPNAGKS. Residue 15 to 22 coordinates GTP; that stretch reads GPPNAGKS. The tract at residues 41 to 45 is G2; sequence QTTRN. Residues 62-65 form a G3 region; that stretch reads DTPG. GTP-binding positions include 62-66 and 130-133; these read DTPGI and NKVD. A G4 region spans residues 130–133; it reads NKVD. The tract at residues 160-162 is G5; sequence VSA. Positions 212 to 290 constitute a KH type-2 domain; that stretch reads LRQELPYSVA…HLELWVKVRE (79 aa).

This sequence belongs to the TRAFAC class TrmE-Era-EngA-EngB-Septin-like GTPase superfamily. Era GTPase family. Monomer.

It localises to the cytoplasm. Its subcellular location is the cell inner membrane. Functionally, an essential GTPase that binds both GDP and GTP, with rapid nucleotide exchange. Plays a role in 16S rRNA processing and 30S ribosomal subunit biogenesis and possibly also in cell cycle regulation and energy metabolism. The polypeptide is GTPase Era (Nitratidesulfovibrio vulgaris (strain DSM 19637 / Miyazaki F) (Desulfovibrio vulgaris)).